Here is a 2161-residue protein sequence, read N- to C-terminus: Voltage-dependent L-type calcium channel subunit alpha-1D (2161 aa).

Disordered stretches follow at residues Met1–Ala21, Thr30–Thr49, and Lys64–Ser100. The Cytoplasmic portion of the chain corresponds to Met1 to Lys126. Polar residues predominate over residues Gly38–Thr49. Basic residues predominate over residues Gln82–Lys93. One copy of the I repeat lies at Asn113 to Phe409. The chain crosses the membrane as a helical span at residues Pro127–Ile145. The Extracellular segment spans residues Tyr146 to Lys163. A glycan (N-linked (GlcNAc...) asparagine) is linked at Asn155. Residues Val164–Tyr183 form a helical membrane-spanning segment. The Cytoplasmic portion of the chain corresponds to Gly184–Asn195. The helical transmembrane segment at Gly196–Leu214 threads the bilayer. Residues Glu215 to Asp235 lie on the Extracellular side of the membrane. N-linked (GlcNAc...) asparagine glycosylation occurs at Asn225. Residues Val236–Val254 form a helical membrane-spanning segment. Topologically, residues Pro255–His273 are cytoplasmic. A helical transmembrane segment spans residues Ile274–Phe293. Residues Ile294–Leu381 lie on the Extracellular side of the membrane. A glycan (N-linked (GlcNAc...) asparagine) is linked at Asn329. A Ca(2+)-binding site is contributed by Glu364. Residues Pro382 to Ser406 traverse the membrane as a helical segment. The Cytoplasmic portion of the chain corresponds to Gly407–Val523. The segment at Gln429–Glu446 is binding to the beta subunit. Positions Asp449 to Glu482 are disordered. Over residues Asn463–Val479 the composition is skewed to polar residues. Residues Asn509–Leu755 form an II repeat. Residues Thr524 to Glu543 form a helical membrane-spanning segment. The Extracellular segment spans residues His544–Ala558. The chain crosses the membrane as a helical span at residues Asn559–Leu577. At Gly578–Ser585 the chain is on the cytoplasmic side. A helical membrane pass occupies residues Leu586 to Leu604. The Extracellular segment spans residues Val605–Gly614. A helical membrane pass occupies residues Ile615–Trp633. At Thr634–Ser652 the chain is on the cytoplasmic side. A helical membrane pass occupies residues Leu653 to Gly673. Residues Gly674–Ile727 are Extracellular-facing. Glu705 is a binding site for Ca(2+). The helical transmembrane segment at Val728 to Val752 threads the bilayer. Residues Asp753 to His886 lie on the Cytoplasmic side of the membrane. Positions Lys766 to Lys790 are enriched in basic and acidic residues. Residues Lys766 to Glu850 form a disordered region. A compositionally biased stretch (polar residues) spans Pro791–Lys802. Acidic residues predominate over residues Val825–Glu838. One copy of the III repeat lies at Asn873–Phe1155. Residues Ile887–Ala905 form a helical membrane-spanning segment. The Extracellular portion of the chain corresponds to Glu906 to Tyr921. Residues Phe922–Phe941 form a helical membrane-spanning segment. Residues Gly942–Asn953 lie on the Cytoplasmic side of the membrane. Residues Tyr954–Ile972 form a helical membrane-spanning segment. At Gln973 to Ser978 the chain is on the extracellular side. A helical transmembrane segment spans residues Val979–Ala998. The Cytoplasmic portion of the chain corresponds to Lys999–Asn1017. Residues Ile1018–Phe1037 traverse the membrane as a helical segment. Topologically, residues Lys1038–Glu1127 are extracellular. The interval Arg1075–Asn1165 is dihydropyridine binding. Glu1101 serves as a coordination point for Ca(2+). Residues Ile1128–Val1148 form a helical membrane-spanning segment. The Cytoplasmic portion of the chain corresponds to Gly1149–Ser1205. The IV repeat unit spans residues Asn1192 to Phe1467. Residues Pro1206–Met1224 form a helical membrane-spanning segment. Topologically, residues Gln1225–Ile1239 are extracellular. The helical transmembrane segment at Leu1240–Phe1259 threads the bilayer. Over Lys1260 to Ser1266 the chain is Cytoplasmic. The helical transmembrane segment at Asp1267–Glu1288 threads the bilayer. Topologically, residues Ala1289–Ile1313 are extracellular. Residues Ser1314–Gly1333 traverse the membrane as a helical segment. The Cytoplasmic portion of the chain corresponds to Glu1334–Tyr1352. Residues Val1353–Phe1372 traverse the membrane as a helical segment. Over Gly1373–Phe1439 the chain is Extracellular. Positions Leu1420 to Lys1486 are dihydropyridine binding. The tract at residues Glu1432–Ser1475 is phenylalkylamine binding. A helical transmembrane segment spans residues Ala1440–Met1464. Over Asp1465–Leu2161 the chain is Cytoplasmic. 4 disordered regions span residues Ser1659–Val1678, Ala1684–Thr1804, Pro1872–Arg1919, and Asn2108–Ala2152. Positions Ser1745–Met1763 are enriched in polar residues. Positions His1779–Arg1797 are enriched in basic and acidic residues. Acidic residues predominate over residues Ser2138–Ala2152.

It belongs to the calcium channel alpha-1 subunit (TC 1.A.1.11) family. CACNA1D subfamily. Voltage-dependent calcium channels are multisubunit complexes, consisting of alpha-1, alpha-2, beta and delta subunits in a 1:1:1:1 ratio. The channel activity is directed by the pore-forming and voltage-sensitive alpha-1 subunit. In many cases, this subunit is sufficient to generate voltage-sensitive calcium channel activity. The auxiliary subunits beta and alpha-2/delta linked by a disulfide bridge regulate the channel activity. Channel activity is further modulated, depending on the presence of specific delta subunit isoforms. Interacts (via IQ domain) with CABP1 and CABP4 in a calcium independent manner. Interacts with RIMBP2. Expressed in pancreatic islets and in brain, where it has been seen in cerebral cortex, hippocampus, basal ganglia, habenula and thalamus. Expressed in the small cell lung carcinoma cell line SCC-9. No expression in skeletal muscle.

It localises to the membrane. It catalyses the reaction Ca(2+)(in) = Ca(2+)(out). In terms of biological role, voltage-sensitive calcium channels (VSCC) mediate the entry of calcium ions into excitable cells and are also involved in a variety of calcium-dependent processes, including muscle contraction, hormone or neurotransmitter release, gene expression, cell motility, cell division and cell death. The isoform alpha-1D gives rise to L-type calcium currents. Long-lasting (L-type) calcium channels belong to the 'high-voltage activated' (HVA) group. They are blocked by dihydropyridines (DHP), phenylalkylamines, and by benzothiazepines. Functionally, voltage-sensitive calcium channels (VSCC) mediate the entry of calcium ions into excitable cells and are also involved in a variety of calcium-dependent processes, including muscle contraction, hormone or neurotransmitter release, gene expression, cell motility, cell division and cell death. The isoform alpha-1D gives rise to L-type calcium currents. This chain is Voltage-dependent L-type calcium channel subunit alpha-1D (CACNA1D), found in Homo sapiens (Human).